Consider the following 381-residue polypeptide: Cell division protein FtsZ (381 aa).

The tract at residues 1–25 is disordered; it reads MKFINDAIKESEKREKPSSSSMNSE. A compositionally biased stretch (basic and acidic residues) spans 7–17; the sequence is AIKESEKREKP. Residues 48-52, 135-137, E166, R170, and D213 each bind GTP; these read GAGNN and GTG.

This sequence belongs to the FtsZ family. Homodimer. Polymerizes to form a dynamic ring structure in a strictly GTP-dependent manner. Interacts directly with several other division proteins.

Its subcellular location is the cytoplasm. Functionally, essential cell division protein that forms a contractile ring structure (Z ring) at the future cell division site. The regulation of the ring assembly controls the timing and the location of cell division. One of the functions of the FtsZ ring is to recruit other cell division proteins to the septum to produce a new cell wall between the dividing cells. Binds GTP and shows GTPase activity. The chain is Cell division protein FtsZ from Methanothermobacter thermautotrophicus (strain ATCC 29096 / DSM 1053 / JCM 10044 / NBRC 100330 / Delta H) (Methanobacterium thermoautotrophicum).